Consider the following 434-residue polypeptide: Alpha-enolase (434 aa).

N-acetylserine is present on Ser-2. N6-acetyllysine is present on Lys-5. A Phosphoserine modification is found at Ser-27. Ser-40 provides a ligand contact to Mg(2+). Tyr-44 bears the Phosphotyrosine mark. An N6-acetyllysine; alternate modification is found at Lys-60. At Lys-60 the chain carries N6-succinyllysine; alternate. N6-acetyllysine occurs at positions 64 and 71. Lys-89 is subject to N6-acetyllysine; alternate. Position 89 is an N6-succinyllysine; alternate (Lys-89). An N6-acetyllysine mark is found at Lys-92 and Lys-126. 2 residues coordinate substrate: His-158 and Glu-167. Lys-193 and Lys-199 each carry N6-acetyllysine. Lys-202 is modified (N6-acetyllysine; alternate). A Glycyl lysine isopeptide (Lys-Gly) (interchain with G-Cter in SUMO2); alternate cross-link involves residue Lys-202. The active-site Proton donor is Glu-210. An N6-acetyllysine; alternate mark is found at Lys-228 and Lys-233. The residue at position 228 (Lys-228) is an N6-succinyllysine; alternate. Lys-228 is modified (N6-(2-hydroxyisobutyryl)lysine; alternate). The residue at position 233 (Lys-233) is an N6-malonyllysine; alternate. Asp-245 lines the Mg(2+) pocket. A Phosphoserine modification is found at Ser-254. N6-acetyllysine is present on Lys-256. Residues Ser-263 and Ser-272 each carry the phosphoserine modification. Lys-281 is modified (N6-acetyllysine; alternate). At Lys-281 the chain carries N6-(2-hydroxyisobutyryl)lysine; alternate. Residue Lys-285 is modified to N6-acetyllysine. Residue Tyr-287 is modified to Phosphotyrosine. Ser-291 is modified (phosphoserine). 2 residues coordinate Mg(2+): Glu-293 and Asp-318. Glu-293 and Asp-318 together coordinate substrate. An N6-acetyllysine mark is found at Lys-335 and Lys-343. Lys-343 serves as the catalytic Proton acceptor. Substrate-binding positions include 370–373 (SHRS) and Lys-394. The segment at 405–434 (AKYNQLLRIEEELGSKAKFAGRNFRNPLAK) is required for interaction with PLG. Lys-406 bears the N6-acetyllysine mark. Lys-420 bears the N6-acetyllysine; alternate mark. An N6-succinyllysine; alternate modification is found at Lys-420. The residue at position 420 (Lys-420) is an N6-malonyllysine; alternate.

It belongs to the enolase family. Mammalian enolase is composed of 3 isozyme subunits, alpha, beta and gamma, which can form homodimers or heterodimers which are cell-type and development-specific. ENO1 interacts with PLG in the neuronal plasma membrane and promotes its activation. The C-terminal lysine is required for this binding. Interacts with ENO4 and PGAM2. Interacts with CMTM6. The cofactor is Mg(2+). Post-translationally, ISGylated. In terms of processing, lysine 2-hydroxyisobutyrylation (Khib) by p300/EP300 activates the phosphopyruvate hydratase activity.

Its subcellular location is the cytoplasm. It localises to the cell membrane. The enzyme catalyses (2R)-2-phosphoglycerate = phosphoenolpyruvate + H2O. The protein operates within carbohydrate degradation; glycolysis; pyruvate from D-glyceraldehyde 3-phosphate: step 4/5. Functionally, glycolytic enzyme the catalyzes the conversion of 2-phosphoglycerate to phosphoenolpyruvate. In addition to glycolysis, involved in various processes such as growth control, hypoxia tolerance and allergic responses. May also function in the intravascular and pericellular fibrinolytic system due to its ability to serve as a receptor and activator of plasminogen on the cell surface of several cell-types such as leukocytes and neurons. Stimulates immunoglobulin production. In Macaca fascicularis (Crab-eating macaque), this protein is Alpha-enolase (ENO1).